The following is a 732-amino-acid chain: Inducible ornithine decarboxylase (732 aa).

An N6-(pyridoxal phosphate)lysine modification is found at Lys355.

The protein belongs to the Orn/Lys/Arg decarboxylase class-I family. The cofactor is pyridoxal 5'-phosphate.

It carries out the reaction L-ornithine + H(+) = putrescine + CO2. Its pathway is amine and polyamine biosynthesis; putrescine biosynthesis via L-ornithine pathway; putrescine from L-ornithine: step 1/1. Functionally, the first enzyme leading to putrescine and thus polyamine synthesis. The sequence is that of Inducible ornithine decarboxylase from Escherichia coli (strain K12).